The sequence spans 124 residues: Ribonuclease pancreatic (124 aa).

Positions lysine 1 to asparagine 24 are disordered. Residues lysine 7 and arginine 10 each coordinate substrate. Histidine 12 functions as the Proton acceptor in the catalytic mechanism. Cystine bridges form between cysteine 26–cysteine 84, cysteine 40–cysteine 95, cysteine 58–cysteine 110, and cysteine 65–cysteine 72. An N-linked (GlcNAc...) asparagine; in river-breed only glycan is attached at asparagine 34. Residues lysine 41–threonine 45, lysine 66, and arginine 85 each bind substrate. Histidine 119 acts as the Proton donor in catalysis.

This sequence belongs to the pancreatic ribonuclease family. In terms of assembly, monomer. Interacts with and forms tight 1:1 complexes with RNH1. Dimerization of two such complexes may occur. Interaction with RNH1 inhibits this protein. In terms of processing, swamp breed ribonuclease do not bind carbohydrate, but there is evidence of a polymorphic form that does. Pancreas.

The protein resides in the secreted. The catalysed reaction is an [RNA] containing cytidine + H2O = an [RNA]-3'-cytidine-3'-phosphate + a 5'-hydroxy-ribonucleotide-3'-[RNA].. It catalyses the reaction an [RNA] containing uridine + H2O = an [RNA]-3'-uridine-3'-phosphate + a 5'-hydroxy-ribonucleotide-3'-[RNA].. Functionally, endonuclease that catalyzes the cleavage of RNA on the 3' side of pyrimidine nucleotides. Acts on single-stranded and double-stranded RNA. This Bubalus bubalis (Domestic water buffalo) protein is Ribonuclease pancreatic (RNASE1).